Consider the following 925-residue polypeptide: NADH:fumarate oxidoreductase (925 aa).

Residue Thr447 is modified to FMN phosphoryl threonine. 7 residues coordinate FAD: Ala492, Glu511, Asn519, Thr520, Ala525, Gly526, and Val633. Residue Ala525 participates in fumarate binding. Residue Ala525 participates in succinate binding. Succinate-binding residues include His719, Ser731, and Glu732. Fumarate is bound by residues Ser731 and Glu732. Arg756 (proton donor) is an active-site residue. His859 serves as a coordination point for fumarate. His859 is a succinate binding site. 2 residues coordinate FAD: His860 and Glu889. The fumarate site is built by Arg899 and Gly902. Positions 899 and 902 each coordinate succinate. Ala904 and Val905 together coordinate FAD.

It belongs to the FAD-dependent oxidoreductase 2 family. FRD/SDH subfamily. As to quaternary structure, monomer. It depends on FAD as a cofactor. The cofactor is FMN. Is flavinylated on Thr-447 by ApbE2, encoded in a neighboring gene. Flavinylation is essential for catalytic activity.

The protein resides in the cytoplasm. The catalysed reaction is succinate + NAD(+) = fumarate + NADH + H(+). Its function is as follows. Catalyzes the anaerobic reduction of fumarate to succinate. Uses NADH as the inherent electron donor in this process. Is involved in anaerobic fumarate respiration in K.pneumoniae. In Klebsiella pneumoniae (strain 342), this protein is NADH:fumarate oxidoreductase.